The following is a 253-amino-acid chain: 5'-nucleotidase SurE (253 aa).

Residues Asp8, Asp9, Ser40, and Asn97 each contribute to the a divalent metal cation site.

The protein belongs to the SurE nucleotidase family. A divalent metal cation is required as a cofactor.

The protein localises to the cytoplasm. It carries out the reaction a ribonucleoside 5'-phosphate + H2O = a ribonucleoside + phosphate. In terms of biological role, nucleotidase that shows phosphatase activity on nucleoside 5'-monophosphates. The sequence is that of 5'-nucleotidase SurE from Desulforamulus reducens (strain ATCC BAA-1160 / DSM 100696 / MI-1) (Desulfotomaculum reducens).